Reading from the N-terminus, the 307-residue chain is Ribosomal protein L11 methyltransferase (307 aa).

Residues Thr-162, Gly-183, Asp-205, and Asn-244 each contribute to the S-adenosyl-L-methionine site.

The protein belongs to the methyltransferase superfamily. PrmA family.

Its subcellular location is the cytoplasm. It carries out the reaction L-lysyl-[protein] + 3 S-adenosyl-L-methionine = N(6),N(6),N(6)-trimethyl-L-lysyl-[protein] + 3 S-adenosyl-L-homocysteine + 3 H(+). Its function is as follows. Methylates ribosomal protein L11. This chain is Ribosomal protein L11 methyltransferase, found in Bordetella parapertussis (strain 12822 / ATCC BAA-587 / NCTC 13253).